A 545-amino-acid chain; its full sequence is Chaperonin GroEL (545 aa).

ATP is bound by residues 30–33 (TLGP), K51, 87–91 (DGTTT), G415, and D495.

This sequence belongs to the chaperonin (HSP60) family. In terms of assembly, forms a cylinder of 14 subunits composed of two heptameric rings stacked back-to-back. Interacts with the co-chaperonin GroES.

Its subcellular location is the cytoplasm. The enzyme catalyses ATP + H2O + a folded polypeptide = ADP + phosphate + an unfolded polypeptide.. Its function is as follows. Together with its co-chaperonin GroES, plays an essential role in assisting protein folding. The GroEL-GroES system forms a nano-cage that allows encapsulation of the non-native substrate proteins and provides a physical environment optimized to promote and accelerate protein folding. This is Chaperonin GroEL from Yersinia pestis bv. Antiqua (strain Antiqua).